Here is a 1098-residue protein sequence, read N- to C-terminus: Protein diaphanous homolog 2 (1098 aa).

Residue methionine 1 is modified to N-acetylmethionine. The interval 1–62 is disordered; the sequence is MEELGAAASG…SFRKSATKRE (62 aa). The span at 36–52 shows a compositional bias: basic and acidic residues; that stretch reads ANEEETRNKPKLRDRIT. Residues 90–463 form the GBD/FH3 domain; the sequence is SLILSEKEVL…QIVLHCSGMD (374 aa). Coiled-coil stretches lie at residues 375–416 and 490–539; these read QLRV…NMLK and EENE…GQGV. Disordered stretches follow at residues 537 to 565, 578 to 611, 679 to 699, 1007 to 1047, and 1063 to 1098; these read QGVPSAIPGPPPPPPLPGAGPCPPPPPPP, PPPPLPGMPGIPPPPPPPLSGVPPPPPPPGGVFP, MKGQRNTEAAEENRSGPPKKK, HKRK…NKEG, and GAAFRDRRKRIPRNPDNRRPPLERSRSRHNGAMSSK. Pro residues-rich tracts occupy residues 543-565 and 578-608; these read IPGPPPPPPLPGAGPCPPPPPPP and PPPPLPGMPGIPPPPPPPLSGVPPPPPPPGG. The FH1 domain maps to 544 to 620; the sequence is PGPPPPPPLP…PLLSGPIELP (77 aa). In terms of domain architecture, FH2 spans 625–1025; the sequence is QKKLYKPDIP…SRRAKLAKEK (401 aa). The stretch at 999–1050 forms a coiled coil; sequence FLEALKENHKRKEMEEKSRRAKLAKEKAEQEKLERQKKKKQLIDINKEGDET. 2 stretches are compositionally biased toward basic and acidic residues: residues 1007–1032 and 1075–1087; these read HKRKEMEEKSRRAKLAKEKAEQEKLE and RNPDNRRPPLERS. Residues 1048–1078 enclose the DAD domain; that stretch reads DETGVMDNLLEALQSGAAFRDRRKRIPRNPD.

It belongs to the formin homology family. Diaphanous subfamily. Interacts with MAPRE1 and APC.

Its function is as follows. May be involved in oogenesis. The chain is Protein diaphanous homolog 2 (Diaph2) from Mus musculus (Mouse).